The chain runs to 562 residues: Teichoic acid ribitol-phosphate polymerase TarL (562 aa).

The protein belongs to the CDP-glycerol glycerophosphotransferase family.

It localises to the cell membrane. It carries out the reaction 4-O-[di(2R)-glycerylphospho]-N-acetyl-beta-D-mannosaminyl-(1-&gt;4)-N-acetyl-alpha-D-glucosaminyl di-trans,octa-cis-undecaprenyl diphosphate + n CDP-L-ribitol = 4-O-[(D-ribitylphospho)(n)-di{(2R)-glycerylphospho}]-N-acetyl-beta-D-mannosaminyl-(1-&gt;4)-N-acetyl-alpha-D-glucosaminyl di-trans,octa-cis-undecaprenyl diphosphate + n CMP + n H(+). It functions in the pathway cell wall biogenesis; poly(ribitol phosphate) teichoic acid biosynthesis. Responsible for the polymerization of the main chain of the major teichoic acid by sequential transfer of ribitol phosphate units from CDP-ribitol to the second glycerol phosphate attached to the disaccharide linkage unit. Synthesizes polymers of more than 40 ribitol phosphate units in length. The chain is Teichoic acid ribitol-phosphate polymerase TarL (tarL) from Staphylococcus aureus (strain NCTC 8325 / PS 47).